Here is a 654-residue protein sequence, read N- to C-terminus: Peptide-N(4)-(N-acetyl-beta-glucosaminyl)asparagine amidase (654 aa).

The residue at position 2 (Ala2) is an N-acetylalanine. A PUB domain is found at 30 to 91; the sequence is EASKLLLTYA…EGETHLIFPK (62 aa). Residues 112 to 123 are compositionally biased toward basic and acidic residues; it reads RLDGSNKSHKVE. The tract at residues 112-167 is disordered; the sequence is RLDGSNKSHKVESSQQPAASTQLPTTPSSNPSGLNQHTRNRQGQSPDPPSASTVTP. Positions 124–167 are enriched in polar residues; sequence SSQQPAASTQLPTTPSSNPSGLNQHTRNRQGQSPDPPSASTVTP. Phosphothreonine is present on Thr137. Positions 250, 253, 283, and 286 each coordinate Zn(2+). Cys309 functions as the Nucleophile in the catalytic mechanism. Residues His336 and Asp353 contribute to the active site. In terms of domain architecture, PAW spans 454 to 654; that stretch reads ELGGRISGSV…LEIIIKFSDL (201 aa).

This sequence belongs to the transglutaminase-like superfamily. PNGase family. Component of a complex required to couple retrotranslocation, ubiquitination and deglycosylation composed of NGLY1, SAKS1, AMFR, VCP and RAD23B. Interacts with the proteasome components RAD23B and PSMC1. Interacts with directly with VCP. Interacts with DERL1, bringing it close to the endoplasmic reticulum membrane. Interacts with SAKS1. Zn(2+) serves as cofactor.

It localises to the cytoplasm. The enzyme catalyses Hydrolysis of an N(4)-(acetyl-beta-D-glucosaminyl)asparagine residue in which the glucosamine residue may be further glycosylated, to yield a (substituted) N-acetyl-beta-D-glucosaminylamine and a peptide containing an aspartate residue.. With respect to regulation, inhibited by Z-VAD-fmk, a well-known caspase inhibitor, which inhibits enzyme activity through covalent binding of the carbohydrate to the single Cys-306 residue. Its function is as follows. Specifically deglycosylates the denatured form of N-linked glycoproteins in the cytoplasm and assists their proteasome-mediated degradation. Cleaves the beta-aspartyl-glucosamine (GlcNAc) of the glycan and the amide side chain of Asn, converting Asn to Asp. Prefers proteins containing high-mannose over those bearing complex type oligosaccharides. Can recognize misfolded proteins in the endoplasmic reticulum that are exported to the cytosol to be destroyed and deglycosylate them, while it has no activity toward native proteins. Deglycosylation is a prerequisite for subsequent proteasome-mediated degradation of some, but not all, misfolded glycoproteins. In Macaca fascicularis (Crab-eating macaque), this protein is Peptide-N(4)-(N-acetyl-beta-glucosaminyl)asparagine amidase (NGLY1).